A 389-amino-acid chain; its full sequence is Phospho-N-acetylmuramoyl-pentapeptide-transferase (389 aa).

A run of 10 helical transmembrane segments spans residues arginine 25–isoleucine 45, threonine 73–leucine 93, phenylalanine 97–tyrosine 117, phenylalanine 135–isoleucine 155, valine 190–serine 210, glycine 222–methionine 242, glycine 258–tryptophan 278, valine 286–isoleucine 306, isoleucine 311–valine 331, and glutamine 366–leucine 386.

It belongs to the glycosyltransferase 4 family. MraY subfamily. Mg(2+) serves as cofactor.

The protein resides in the cell inner membrane. It carries out the reaction UDP-N-acetyl-alpha-D-muramoyl-L-alanyl-gamma-D-glutamyl-meso-2,6-diaminopimeloyl-D-alanyl-D-alanine + di-trans,octa-cis-undecaprenyl phosphate = di-trans,octa-cis-undecaprenyl diphospho-N-acetyl-alpha-D-muramoyl-L-alanyl-D-glutamyl-meso-2,6-diaminopimeloyl-D-alanyl-D-alanine + UMP. Its pathway is cell wall biogenesis; peptidoglycan biosynthesis. In terms of biological role, catalyzes the initial step of the lipid cycle reactions in the biosynthesis of the cell wall peptidoglycan: transfers peptidoglycan precursor phospho-MurNAc-pentapeptide from UDP-MurNAc-pentapeptide onto the lipid carrier undecaprenyl phosphate, yielding undecaprenyl-pyrophosphoryl-MurNAc-pentapeptide, known as lipid I. The protein is Phospho-N-acetylmuramoyl-pentapeptide-transferase of Polynucleobacter asymbioticus (strain DSM 18221 / CIP 109841 / QLW-P1DMWA-1) (Polynucleobacter necessarius subsp. asymbioticus).